A 558-amino-acid polypeptide reads, in one-letter code: Formate--tetrahydrofolate ligase (558 aa).

An ATP-binding site is contributed by 67-74 (TPAGEGKT).

Belongs to the formate--tetrahydrofolate ligase family.

The enzyme catalyses (6S)-5,6,7,8-tetrahydrofolate + formate + ATP = (6R)-10-formyltetrahydrofolate + ADP + phosphate. Its pathway is one-carbon metabolism; tetrahydrofolate interconversion. This Ruegeria pomeroyi (strain ATCC 700808 / DSM 15171 / DSS-3) (Silicibacter pomeroyi) protein is Formate--tetrahydrofolate ligase.